The primary structure comprises 232 residues: 5'-methylthioadenosine/S-adenosylhomocysteine nucleosidase (232 aa).

The Proton acceptor role is filled by Glu12. Residues Gly78, Met153, and Met174–Glu175 each bind substrate. Asp198 serves as the catalytic Proton donor.

It belongs to the PNP/UDP phosphorylase family. MtnN subfamily.

It carries out the reaction S-adenosyl-L-homocysteine + H2O = S-(5-deoxy-D-ribos-5-yl)-L-homocysteine + adenine. It catalyses the reaction S-methyl-5'-thioadenosine + H2O = 5-(methylsulfanyl)-D-ribose + adenine. The catalysed reaction is 5'-deoxyadenosine + H2O = 5-deoxy-D-ribose + adenine. It participates in amino-acid biosynthesis; L-methionine biosynthesis via salvage pathway; S-methyl-5-thio-alpha-D-ribose 1-phosphate from S-methyl-5'-thioadenosine (hydrolase route): step 1/2. In terms of biological role, catalyzes the irreversible cleavage of the glycosidic bond in both 5'-methylthioadenosine (MTA) and S-adenosylhomocysteine (SAH/AdoHcy) to adenine and the corresponding thioribose, 5'-methylthioribose and S-ribosylhomocysteine, respectively. Also cleaves 5'-deoxyadenosine, a toxic by-product of radical S-adenosylmethionine (SAM) enzymes, into 5-deoxyribose and adenine. The sequence is that of 5'-methylthioadenosine/S-adenosylhomocysteine nucleosidase from Hydrogenovibrio crunogenus (strain DSM 25203 / XCL-2) (Thiomicrospira crunogena).